Consider the following 592-residue polypeptide: Protein kinase C zeta type (592 aa).

The PB1 domain occupies 15–98 (RVRLKAHYGG…EVLIIHVFPS (84 aa)). Residues 79–145 (AFRLVCQGRD…KRFNRGAYCG (67 aa)) are interaction with SQSTM1. The Phorbol-ester/DAG-type zinc finger occupies 130–180 (GHLFQAKRFNRGAYCGQCSERIWGLSRQGYRCINCKLLVHKRCHVLVPLTC). One can recognise a Protein kinase domain in the interval 252–518 (FDLIRVIGRG…FSDIKSHAFF (267 aa)). Residues 258–266 (IGRGSYAKV) and Lys281 each bind ATP. The active-site Proton acceptor is the Asp376. At Thr410 the chain carries Phosphothreonine; by PDPK1 and PI3K. The AGC-kinase C-terminal domain occupies 519-590 (RSIDWDLLEK…INPLLLSAEE (72 aa)). Thr560 carries the phosphothreonine modification. Ser591 carries the phosphoserine modification.

This sequence belongs to the protein kinase superfamily. AGC Ser/Thr protein kinase family. PKC subfamily. In terms of assembly, interacts directly with SQSTM1. Forms a ternary complex with SQSTM1 and KCNAB2. Forms another ternary complex with SQSTM1 and GABRR3. Forms a complex with SQSTM1 and MAP2K5. Interacts with PARD6A, PARD6B and PARD6G. Part of a complex with PARD3, PARD6A or PARD6B or PARD6G and CDC42 or RAC1. Interacts with ADAP1/CENTA1. Interacts (via the protein kinase domain) with WWC1. Forms a tripartite complex with WWC1 and DDR1, but predominantly in the absence of collagen. Interacts with PDPK1 (via N-terminal region). Interacts with WDFY2 (via WD repeats 1-3). Interacts with VAMP2. Forms a complex with WDFY2 and VAMP2. Interacts with APPL1. Interacts with WWC1, WWC2 and WWC3. Post-translationally, CDH5 is required for its phosphorylation at Thr-410. Phosphorylated by protein kinase PDPK1; phosphorylation is inhibited by the apoptotic C-terminal cleavage product of PKN2. Phosphorylation at Thr-410 by PI3K activates the kinase. As to expression, isoform 1: In brain, highly expressed in cerebellar granule neurons and cerebellar astrocytes (at protein level). Expressed at low levels in testes, lung and kidney. Isoform 2: Specifically expressed in brain where it localizes to cerebellar granule neurons (at protein level).

It localises to the cytoplasm. The protein resides in the endosome. Its subcellular location is the cell junction. It is found in the membrane. It catalyses the reaction L-seryl-[protein] + ATP = O-phospho-L-seryl-[protein] + ADP + H(+). It carries out the reaction L-threonyl-[protein] + ATP = O-phospho-L-threonyl-[protein] + ADP + H(+). With respect to regulation, atypical PKCs (PRKCI and PRKCZ) exhibit an elevated basal enzymatic activity (that may be due to the interaction with SMG1 or SQSTM1) and are not regulated by diacylglycerol, phosphatidylserine, phorbol esters or calcium ions. Two specific sites, Thr-410 (activation loop of the kinase domain) and Thr-560 (turn motif), need to be phosphorylated for its full activation. Phosphatidylinositol 3,4,5-trisphosphate might be a physiological activator. Isoform 2: Constitutively active. Functionally, calcium- and diacylglycerol-independent serine/threonine-protein kinase that functions in phosphatidylinositol 3-kinase (PI3K) pathway and mitogen-activated protein (MAP) kinase cascade, and is involved in NF-kappa-B activation, mitogenic signaling, cell proliferation, cell polarity, inflammatory response and maintenance of long-term potentiation (LTP). Upon lipopolysaccharide (LPS) treatment in macrophages, or following mitogenic stimuli, functions downstream of PI3K to activate MAP2K1/MEK1-MAPK1/ERK2 signaling cascade independently of RAF1 activation. Required for insulin-dependent activation of AKT3, but may function as an adapter rather than a direct activator. Upon insulin treatment may act as a downstream effector of PI3K and contribute to the activation of translocation of the glucose transporter SLC2A4/GLUT4 and subsequent glucose transport in adipocytes. In EGF-induced cells, binds and activates MAP2K5/MEK5-MAPK7/ERK5 independently of its kinase activity and can activate JUN promoter through MEF2C. Through binding with SQSTM1/p62, functions in interleukin-1 signaling and activation of NF-kappa-B with the specific adapters RIPK1 and TRAF6. Participates in TNF-dependent transactivation of NF-kappa-B by phosphorylating and activating IKBKB kinase, which in turn leads to the degradation of NF-kappa-B inhibitors. In migrating astrocytes, forms a cytoplasmic complex with PARD6A and is recruited by CDC42 to function in the establishment of cell polarity along with the microtubule motor and dynein. In association with FEZ1, stimulates neuronal differentiation in PC12 cells. In the inflammatory response, is required for the T-helper 2 (Th2) differentiation process, including interleukin production, efficient activation of JAK1 and the subsequent phosphorylation and nuclear translocation of STAT6. May be involved in development of allergic airway inflammation (asthma), a process dependent on Th2 immune response. In the NF-kappa-B-mediated inflammatory response, can relieve SETD6-dependent repression of NF-kappa-B target genes by phosphorylating the RELA subunit at 'Ser-311'. Phosphorylates VAMP2 in vitro. Phosphorylates and activates LRRK1, which phosphorylates RAB proteins involved in intracellular trafficking. Involved in late synaptic long term potentiation phase in CA1 hippocampal cells and long term memory maintenance. The protein is Protein kinase C zeta type (Prkcz) of Mus musculus (Mouse).